Here is a 691-residue protein sequence, read N- to C-terminus: Elongation factor G (691 aa).

A tr-type G domain is found at 8 to 283 (EDYRNFGIMA…AVVDYLPTPI (276 aa)). Residues 17-24 (AHIDAGKT), 81-85 (DTPGH), and 135-138 (NKMD) each bind GTP.

This sequence belongs to the TRAFAC class translation factor GTPase superfamily. Classic translation factor GTPase family. EF-G/EF-2 subfamily.

It is found in the cytoplasm. Functionally, catalyzes the GTP-dependent ribosomal translocation step during translation elongation. During this step, the ribosome changes from the pre-translocational (PRE) to the post-translocational (POST) state as the newly formed A-site-bound peptidyl-tRNA and P-site-bound deacylated tRNA move to the P and E sites, respectively. Catalyzes the coordinated movement of the two tRNA molecules, the mRNA and conformational changes in the ribosome. The chain is Elongation factor G from Beijerinckia indica subsp. indica (strain ATCC 9039 / DSM 1715 / NCIMB 8712).